The chain runs to 296 residues: Sulfotransferase 1E1 (296 aa).

49-54 provides a ligand contact to 3'-phosphoadenylyl sulfate; sequence KSGTTW. Residue 107 to 109 coordinates substrate; sequence KTH. Residue His-109 is the Proton acceptor of the active site. 3'-phosphoadenylyl sulfate contacts are provided by residues Arg-131, Ser-139, Tyr-194, 228–233, and 258–260; these read TSFQEM and RKG.

It belongs to the sulfotransferase 1 family. Homodimer. The N-terminus is blocked. In terms of tissue distribution, adrenal gland and much less in liver. Detectable only during pregnancy in uterine.

The protein localises to the cytoplasm. The protein resides in the cytosol. The catalysed reaction is estrone + 3'-phosphoadenylyl sulfate = estrone 3-sulfate + adenosine 3',5'-bisphosphate + H(+). It catalyses the reaction (24S)-hydroxycholesterol + 3'-phosphoadenylyl sulfate = (24S)-hydroxycholesterol 3-sulfate + adenosine 3',5'-bisphosphate + H(+). The enzyme catalyses 17beta-estradiol + 3'-phosphoadenylyl sulfate = 17beta-estradiol 3-sulfate + adenosine 3',5'-bisphosphate + H(+). It carries out the reaction 3beta-hydroxyandrost-5-en-17-one + 3'-phosphoadenylyl sulfate = dehydroepiandrosterone 3-sulfate + adenosine 3',5'-bisphosphate + H(+). The catalysed reaction is 4-ethylphenol + 3'-phosphoadenylyl sulfate = 4-ethylphenyl sulfate + adenosine 3',5'-bisphosphate + H(+). Its activity is regulated as follows. Inhibited by estradiol. Its function is as follows. Sulfotransferase that utilizes 3'-phospho-5'-adenylyl sulfate (PAPS) as sulfonate donor to catalyze the sulfate conjugation of estradiol and estrone. Is a key enzyme in estrogen homeostasis, the sulfation of estrogens leads to their inactivation. Also sulfates dehydroepiandrosterone (DHEA), pregnenolone, (24S)-hydroxycholesteroland xenobiotic compounds like ethinylestradiol, equalenin, diethyl stilbesterol and 1-naphthol at significantly lower efficiency. Does not sulfonate cortisol, testosterone and dopamine. May play a role in gut microbiota-host metabolic interaction. O-sulfonates 4-ethylphenol (4-EP), a dietary tyrosine-derived metabolite produced by gut bacteria. The product 4-EPS crosses the blood-brain barrier and may negatively regulate oligodendrocyte maturation and myelination, affecting the functional connectivity of different brain regions associated with the limbic system. This chain is Sulfotransferase 1E1 (SULT1E1), found in Cavia porcellus (Guinea pig).